Here is a 470-residue protein sequence, read N- to C-terminus: Properdin (470 aa).

The N-terminal stretch at 1–26 (MTAPVQVPQSLLLLLMLLLTLPATGS) is a signal peptide. TSP type-1 domains are found at residues 27–75 (DPVL…QACR), 76–133 (SPRW…QCCP), 135–190 (MGGW…QVCP), 192–254 (HGAW…PPCP), 256–312 (AGGW…VPCP), 314–376 (DGEW…QNCI), and 380–463 (KGSW…PACK). Intrachain disulfides connect Cys31–Cys55, Cys42–Cys71, and Cys56–Cys74. C-linked (Man) tryptophan glycans are attached at residues Trp82 and Trp85. Intrachain disulfides connect Cys88/Cys126, Cys92/Cys132, Cys103/Cys110, Cys131/Cys169, Cys147/Cys183, Cys151/Cys189, and Cys162/Cys173. 3 C-linked (Man) tryptophan glycosylation sites follow: Trp138, Trp141, and Trp144. The O-linked (Fuc...) threonine glycan is linked to Thr150. C-linked (Man) tryptophan glycans are attached at residues Trp195, Trp198, and Trp201. Cystine bridges form between Cys204–Cys247, Cys208–Cys253, and Cys223–Cys237. An O-linked (Fuc...) serine glycan is attached at Ser207. C-linked (Man) tryptophan glycans are attached at residues Trp259 and Trp262. 3 disulfide bridges follow: Cys268–Cys305, Cys272–Cys311, and Cys283–Cys295. Thr271 carries O-linked (Fuc...) threonine glycosylation. C-linked (Man) tryptophan glycans are attached at residues Trp320 and Trp323. Cystine bridges form between Cys326-Cys369, Cys336-Cys375, and Cys349-Cys359. An interaction with Complement C3 beta chain region spans residues 350–358 (KGRKFNGQR). Trp383, Trp386, and Trp389 each carry a C-linked (Man) tryptophan glycan. Disulfide bonds link Cys392/Cys456, Cys396/Cys462, and Cys408/Cys440. Residue Asn429 is glycosylated (N-linked (GlcNAc...) asparagine).

As to quaternary structure, in plasma, properdin exists as dimers, trimers or tetramers in the relative proportions of 26:54:20. Interacts with the pro-C3-convertase enzyme complex (C3b-Bb) comprised of Complement C3 beta chain (C3b) and the Complement factor B Bb fragment (Bb), where it binds (via its TSP type-1 5 domain) with C3b and Bb. This interaction stabilizes the complex and allows it to become the active C3-convertase enzyme complex (C3b-Bb-FP). Interacts with C3b. Interacts with CFB.

Its subcellular location is the secreted. Functionally, a positive regulator of the alternate pathway of complement. It binds to and stabilizes the C3- and C5-convertase enzyme complexes. Inhibits CFI-CFH mediated degradation of Inhibits CFI-CFH mediated degradation of Complement C3 beta chain (C3b). In Cavia porcellus (Guinea pig), this protein is Properdin (CFP).